Consider the following 154-residue polypeptide: SsrA-binding protein (154 aa).

This sequence belongs to the SmpB family.

The protein localises to the cytoplasm. Functionally, required for rescue of stalled ribosomes mediated by trans-translation. Binds to transfer-messenger RNA (tmRNA), required for stable association of tmRNA with ribosomes. tmRNA and SmpB together mimic tRNA shape, replacing the anticodon stem-loop with SmpB. tmRNA is encoded by the ssrA gene; the 2 termini fold to resemble tRNA(Ala) and it encodes a 'tag peptide', a short internal open reading frame. During trans-translation Ala-aminoacylated tmRNA acts like a tRNA, entering the A-site of stalled ribosomes, displacing the stalled mRNA. The ribosome then switches to translate the ORF on the tmRNA; the nascent peptide is terminated with the 'tag peptide' encoded by the tmRNA and targeted for degradation. The ribosome is freed to recommence translation, which seems to be the essential function of trans-translation. This chain is SsrA-binding protein, found in Synechocystis sp. (strain ATCC 27184 / PCC 6803 / Kazusa).